We begin with the raw amino-acid sequence, 161 residues long: Cytochrome c-type biogenesis protein CcmE (161 aa).

The Cytoplasmic portion of the chain corresponds to 1 to 8 (MNPRRKKR). A helical; Signal-anchor for type II membrane protein membrane pass occupies residues 9–29 (LGIVLAIFIGISATIGLMLYA). The Periplasmic segment spans residues 30-161 (LNQNMDLFYT…SSEQKQGSGE (132 aa)). Positions 129 and 133 each coordinate heme. The segment at 142-161 (MKKTHEPLQYSSEQKQGSGE) is disordered. A compositionally biased stretch (polar residues) spans 150–161 (QYSSEQKQGSGE).

It belongs to the CcmE/CycJ family.

The protein resides in the cell inner membrane. Its function is as follows. Heme chaperone required for the biogenesis of c-type cytochromes. Transiently binds heme delivered by CcmC and transfers the heme to apo-cytochromes in a process facilitated by CcmF and CcmH. The protein is Cytochrome c-type biogenesis protein CcmE of Vibrio parahaemolyticus serotype O3:K6 (strain RIMD 2210633).